The sequence spans 156 residues: Small ribosomal subunit protein uS7 (156 aa).

The protein belongs to the universal ribosomal protein uS7 family. Part of the 30S ribosomal subunit. Contacts proteins S9 and S11.

One of the primary rRNA binding proteins, it binds directly to 16S rRNA where it nucleates assembly of the head domain of the 30S subunit. Is located at the subunit interface close to the decoding center, probably blocks exit of the E-site tRNA. This chain is Small ribosomal subunit protein uS7, found in Trichormus variabilis (strain ATCC 29413 / PCC 7937) (Anabaena variabilis).